The chain runs to 364 residues: Dihydroorotate dehydrogenase (quinone) (364 aa).

FMN is bound by residues 61 to 65 (AGFDK) and T85. Residue K65 coordinates substrate. 110 to 114 (NRMGF) is a substrate binding site. FMN contacts are provided by N139 and N170. N170 provides a ligand contact to substrate. Residue S173 is the Nucleophile of the active site. N175 serves as a coordination point for substrate. FMN is bound by residues K214 and A242. Position 243–244 (243–244 (NT)) interacts with substrate. Residues G266, G295, and 316–317 (YS) each bind FMN.

It belongs to the dihydroorotate dehydrogenase family. Type 2 subfamily. In terms of assembly, monomer. Requires FMN as cofactor.

It is found in the cell membrane. The enzyme catalyses (S)-dihydroorotate + a quinone = orotate + a quinol. Its pathway is pyrimidine metabolism; UMP biosynthesis via de novo pathway; orotate from (S)-dihydroorotate (quinone route): step 1/1. Its function is as follows. Catalyzes the conversion of dihydroorotate to orotate with quinone as electron acceptor. The chain is Dihydroorotate dehydrogenase (quinone) from Rhodopseudomonas palustris (strain ATCC BAA-98 / CGA009).